We begin with the raw amino-acid sequence, 234 residues long: Leucyl/phenylalanyl-tRNA--protein transferase (234 aa).

The protein belongs to the L/F-transferase family.

Its subcellular location is the cytoplasm. The enzyme catalyses N-terminal L-lysyl-[protein] + L-leucyl-tRNA(Leu) = N-terminal L-leucyl-L-lysyl-[protein] + tRNA(Leu) + H(+). It catalyses the reaction N-terminal L-arginyl-[protein] + L-leucyl-tRNA(Leu) = N-terminal L-leucyl-L-arginyl-[protein] + tRNA(Leu) + H(+). The catalysed reaction is L-phenylalanyl-tRNA(Phe) + an N-terminal L-alpha-aminoacyl-[protein] = an N-terminal L-phenylalanyl-L-alpha-aminoacyl-[protein] + tRNA(Phe). Functions in the N-end rule pathway of protein degradation where it conjugates Leu, Phe and, less efficiently, Met from aminoacyl-tRNAs to the N-termini of proteins containing an N-terminal arginine or lysine. In Salmonella paratyphi A (strain ATCC 9150 / SARB42), this protein is Leucyl/phenylalanyl-tRNA--protein transferase.